Consider the following 512-residue polypeptide: ATP synthase subunit alpha (512 aa).

Residue 169-176 (GDRQTGKT) coordinates ATP.

The protein belongs to the ATPase alpha/beta chains family. In terms of assembly, F-type ATPases have 2 components, CF(1) - the catalytic core - and CF(0) - the membrane proton channel. CF(1) has five subunits: alpha(3), beta(3), gamma(1), delta(1), epsilon(1). CF(0) has three main subunits: a(1), b(2) and c(9-12). The alpha and beta chains form an alternating ring which encloses part of the gamma chain. CF(1) is attached to CF(0) by a central stalk formed by the gamma and epsilon chains, while a peripheral stalk is formed by the delta and b chains.

It is found in the cell membrane. The enzyme catalyses ATP + H2O + 4 H(+)(in) = ADP + phosphate + 5 H(+)(out). Functionally, produces ATP from ADP in the presence of a proton gradient across the membrane. The alpha chain is a regulatory subunit. This Buchnera aphidicola subsp. Acyrthosiphon pisum (strain Tuc7) protein is ATP synthase subunit alpha.